Here is a 68-residue protein sequence, read N- to C-terminus: Large ribosomal subunit protein uL29 (68 aa).

The protein belongs to the universal ribosomal protein uL29 family.

This chain is Large ribosomal subunit protein uL29, found in Limosilactobacillus reuteri (strain DSM 20016) (Lactobacillus reuteri).